We begin with the raw amino-acid sequence, 241 residues long: ATP synthase subunit 4, mitochondrial (241 aa).

The transit peptide at 1–35 (MASRLARTAVGAARLRPSVVPRVLPALSTVASPRY) directs the protein to the mitochondrion.

It belongs to the eukaryotic ATPase B chain family. In terms of assembly, F-type ATPases have 2 components, CF(1) - the catalytic core - and CF(0) - the membrane proton channel. In yeast, the dimeric form of ATP synthase consists of 17 polypeptides: alpha, beta, gamma, delta, epsilon, 4 (B), 5 (OSCP), 6 (A), 8, 9 (C), d, E (Tim11), f, g, h, i/j and k.

It is found in the mitochondrion. It localises to the mitochondrion inner membrane. Its function is as follows. Mitochondrial membrane ATP synthase (F(1)F(0) ATP synthase or Complex V) produces ATP from ADP in the presence of a proton gradient across the membrane which is generated by electron transport complexes of the respiratory chain. F-type ATPases consist of two structural domains, F(1) - containing the extramembraneous catalytic core, and F(0) - containing the membrane proton channel, linked together by a central stalk and a peripheral stalk. During catalysis, ATP synthesis in the catalytic domain of F(1) is coupled via a rotary mechanism of the central stalk subunits to proton translocation. Part of the complex F(0) domain and the peripheric stalk, which acts as a stator to hold the catalytic alpha(3)beta(3) subcomplex and subunit a/atp6 static relative to the rotary elements. In Neurospora crassa (strain ATCC 24698 / 74-OR23-1A / CBS 708.71 / DSM 1257 / FGSC 987), this protein is ATP synthase subunit 4, mitochondrial (atp-3).